A 140-amino-acid polypeptide reads, in one-letter code: Large ribosomal subunit protein bL17 (140 aa).

The protein belongs to the bacterial ribosomal protein bL17 family. Part of the 50S ribosomal subunit. Contacts protein L32.

In Hyphomonas neptunium (strain ATCC 15444), this protein is Large ribosomal subunit protein bL17.